The primary structure comprises 104 residues: Protein MHF2 homolog (104 aa).

This sequence belongs to the CENP-X/MHF2 family.

Its subcellular location is the nucleus. In terms of biological role, acts in the same pathway as FANCM to restrain class II meiotic crossing over (CO), and acts with FANCM during meiosis to repair interstrand cross-links (ICLs). This chain is Protein MHF2 homolog, found in Arabidopsis thaliana (Mouse-ear cress).